The sequence spans 337 residues: P2Y purinoceptor 14 (337 aa).

At Met1–Tyr28 the chain is on the extracellular side. The N-linked (GlcNAc...) asparagine glycan is linked to Asn2. The chain crosses the membrane as a helical span at residues Phe29–Val49. At Pro50–Ser54 the chain is on the cytoplasmic side. Residues Phe55–Phe75 form a helical membrane-spanning segment. Topologically, residues Lys76–Val95 are extracellular. A disulfide bond links Cys93 and Cys171. The chain crosses the membrane as a helical span at residues Ser96–Phe116. Residues Asp117–Lys138 lie on the Cytoplasmic side of the membrane. Residues Leu139–Thr159 traverse the membrane as a helical segment. Topologically, residues Asn160–Ser187 are extracellular. A glycan (N-linked (GlcNAc...) asparagine) is linked at Asn162. The chain crosses the membrane as a helical span at residues Tyr188–Ile208. Residues Thr209–Asn233 lie on the Cytoplasmic side of the membrane. A helical transmembrane segment spans residues Ile234–Pro254. The Extracellular segment spans residues Tyr255–Glu277. A helical transmembrane segment spans residues Phe278–Cys298. Residues Gln299–Leu337 lie on the Cytoplasmic side of the membrane.

Belongs to the G-protein coupled receptor 1 family.

The protein localises to the cell membrane. Receptor for UDP-glucose and other UDP-sugar coupled to G-proteins. Not activated by ATP, ADP, UTP or ATP. This is P2Y purinoceptor 14 (P2RY14) from Bos taurus (Bovine).